The following is a 351-amino-acid chain: 5-deoxyribose 1-phosphate isomerase (351 aa).

Substrate is bound by residues 48-50, arginine 91, and glutamine 198; that span reads RGA. The active-site Proton donor is the aspartate 239. 249 to 250 provides a ligand contact to substrate; it reads NK.

It belongs to the EIF-2B alpha/beta/delta subunits family. DrdI subfamily.

It catalyses the reaction 5-deoxy-alpha-D-ribose 1-phosphate = 5-deoxy-D-ribulose 1-phosphate. It participates in carbohydrate degradation. Its function is as follows. Catalyzes the isomerization of 5-deoxy-alpha-D-ribose 1-phosphate to 5-deoxy-D-ribulose 1-phosphate, as part of a 5-deoxyribose salvage pathway that recycles this toxic radical SAM enzyme by-product to mainstream metabolites. The protein is 5-deoxyribose 1-phosphate isomerase of Moorella thermoacetica (strain ATCC 39073 / JCM 9320).